The sequence spans 37 residues: Large ribosomal subunit protein bL36 (37 aa).

This sequence belongs to the bacterial ribosomal protein bL36 family.

The chain is Large ribosomal subunit protein bL36 from Borreliella afzelii (strain PKo) (Borrelia afzelii).